Consider the following 353-residue polypeptide: Paraneoplastic antigen Ma1 homolog (353 aa).

It belongs to the PNMA family. As to expression, testis and brain specific.

It localises to the nucleus. Its subcellular location is the nucleolus. The chain is Paraneoplastic antigen Ma1 homolog (Pnma1) from Rattus norvegicus (Rat).